A 606-amino-acid polypeptide reads, in one-letter code: Glutamine--fructose-6-phosphate aminotransferase [isomerizing] (606 aa).

The active-site Nucleophile; for GATase activity is the Cys2. Positions 2 to 218 constitute a Glutamine amidotransferase type-2 domain; it reads CGIFGYLGQR…SGELAVLRIG (217 aa). SIS domains are found at residues 278–424 and 455–596; these read FAES…QRQE and WRCR…VDRP. Residue Lys601 is the For Fru-6P isomerization activity of the active site.

As to quaternary structure, homodimer.

Its subcellular location is the cytoplasm. The enzyme catalyses D-fructose 6-phosphate + L-glutamine = D-glucosamine 6-phosphate + L-glutamate. In terms of biological role, catalyzes the first step in hexosamine metabolism, converting fructose-6P into glucosamine-6P using glutamine as a nitrogen source. In Chlamydia muridarum (strain MoPn / Nigg), this protein is Glutamine--fructose-6-phosphate aminotransferase [isomerizing].